Here is a 584-residue protein sequence, read N- to C-terminus: Alkaline nuclease (584 aa).

The interval G409–E430 is disordered.

The protein belongs to the herpesviridae alkaline nuclease family. Interacts with major DNA-binding protein; this interaction increases the nuclease processivity of the alkaline exonuclease.

It is found in the host nucleus. The protein resides in the host cytoplasm. Its function is as follows. Plays a role in processing non linear or branched viral DNA intermediates in order to promote the production of mature packaged unit-length linear progeny viral DNA molecules. Exhibits endonuclease and exonuclease activities and accepts both double-stranded and single-stranded DNA as substrate. Exonuclease digestion of DNA is in the 5'-&gt; 3' direction and the products are 5'-monophosphate nucleosides. Additionally, forms a recombinase with the major DNA-binding protein, which displays strand exchange activity. This chain is Alkaline nuclease (UL98), found in Human cytomegalovirus (strain AD169) (HHV-5).